A 485-amino-acid chain; its full sequence is Glutamate mutase epsilon subunit (485 aa).

Arg-66 provides a ligand contact to L-glutamate. An adenosylcob(III)alamin-binding site is contributed by Gly-68. L-glutamate is bound at residue Arg-100. Adenosylcob(III)alamin is bound at residue Asn-123. L-glutamate is bound by residues 149–150, Glu-171, and Tyr-177; that span reads RH. Position 180 (Pro-180) interacts with adenosylcob(III)alamin. Residue Tyr-181 coordinates L-glutamate. Residues Phe-297, Lys-326, Glu-330, and Ile-334 each coordinate adenosylcob(III)alamin.

Belongs to the methylaspartate mutase GlmE subunit family. In terms of assembly, heterotetramer composed of 2 epsilon subunits (GlmE) and 2 sigma subunits (GlmS). GlmE exists as a homodimer and GlmS as a monomer. Adenosylcob(III)alamin is required as a cofactor.

It carries out the reaction (2S,3S)-3-methyl-L-aspartate = L-glutamate. It participates in amino-acid degradation; L-glutamate degradation via mesaconate pathway; acetate and pyruvate from L-glutamate: step 1/4. Its function is as follows. Catalyzes the carbon skeleton rearrangement of L-glutamate to L-threo-3-methylaspartate ((2S,3S)-3-methylaspartate). This Treponema denticola (strain ATCC 35405 / DSM 14222 / CIP 103919 / JCM 8153 / KCTC 15104) protein is Glutamate mutase epsilon subunit.